Here is a 305-residue protein sequence, read N- to C-terminus: Putative S-adenosyl-L-methionine-dependent methyltransferase MAB_4607c (305 aa).

S-adenosyl-L-methionine-binding positions include aspartate 128 and 155-156 (DL).

The protein belongs to the UPF0677 family.

Exhibits S-adenosyl-L-methionine-dependent methyltransferase activity. This is Putative S-adenosyl-L-methionine-dependent methyltransferase MAB_4607c from Mycobacteroides abscessus (strain ATCC 19977 / DSM 44196 / CCUG 20993 / CIP 104536 / JCM 13569 / NCTC 13031 / TMC 1543 / L948) (Mycobacterium abscessus).